The sequence spans 345 residues: L-erythro-3,5-diaminohexanoate dehydrogenase (345 aa).

The protein belongs to the KDD family. As to quaternary structure, homodimer.

The enzyme catalyses (3S,5S)-3,5-diaminohexanoate + NAD(+) + H2O = (5S)-5-amino-3-oxohexanoate + NH4(+) + NADH + H(+). Its pathway is amino-acid degradation; L-lysine degradation via acetate pathway. Its function is as follows. Involved in the anaerobic fermentation of lysine. Catalyzes the oxidative deamination of L-erythro-3,5-diaminohexanoate (3,5-DAH) to 3-keto-5-aminohexanoate (KAH). It can use NAD or NADP. The sequence is that of L-erythro-3,5-diaminohexanoate dehydrogenase from Fusobacterium nucleatum subsp. nucleatum (strain ATCC 25586 / DSM 15643 / BCRC 10681 / CIP 101130 / JCM 8532 / KCTC 2640 / LMG 13131 / VPI 4355).